The chain runs to 480 residues: F-box only protein 3 (480 aa).

An F-box domain is found at leucine 10–histidine 56. In terms of domain architecture, ApaG spans valine 278–valine 408. A compositionally biased stretch (acidic residues) spans glutamate 419–glycine 459. The segment at glutamate 419–arginine 464 is disordered.

In terms of assembly, part of a SCF (SKP1-cullin-F-box) protein ligase complex SCF(FBXO3) consisting of FBXO3, SKP1, CUL1 and RBX1. Interacts with PML, interaction is direct and takes place either alone or within the SCF complex.

The protein localises to the nucleus. It functions in the pathway protein modification; protein ubiquitination. Functionally, substrate recognition component of the SCF (SKP1-CUL1-F-box protein)-type E3 ubiquitin ligase complex, SCF(FBXO3), which mediates the ubiquitination and subsequent proteasomal degradation of target proteins. Mediates the ubiquitination of HIPK2 and probably that of EP300, leading to rapid degradation by the proteasome. In the presence of PML, HIPK2 ubiquitination still occurs, but degradation is prevented. PML, HIPK2 and FBXO3 may act synergically to activate p53/TP53-dependent transactivation. The SCF(FBXO3) also acts as a regulator of inflammation by mediating ubiquitination and degradation of FBXL2 in response to lipopolysaccharide (LPS). The SCF(FBXO3) complex specifically recognizes FBXL2 phosphorylated at 'Thr-404' and promotes its ubiquitination. The protein is F-box only protein 3 (Fbxo3) of Rattus norvegicus (Rat).